A 121-amino-acid polypeptide reads, in one-letter code: UPF0344 protein BCE_1257 (121 aa).

Helical transmembrane passes span 6–26 (ITAWALGLILFFVAYSLYSAG), 38–58 (LMYIFIIVTGFMLYMSIVKTA), 65–85 (WYGLKMLAGILVIGGMEMVLV), and 92–112 (PTGAVWGLFIVALVAVIYLGL).

The protein belongs to the UPF0344 family.

It localises to the cell membrane. The polypeptide is UPF0344 protein BCE_1257 (Bacillus cereus (strain ATCC 10987 / NRS 248)).